Here is a 317-residue protein sequence, read N- to C-terminus: tRNA dimethylallyltransferase (317 aa).

14-21 (GPTAVGKT) lines the ATP pocket. 16-21 (TAVGKT) is a substrate binding site. Residues 39–42 (DSMQ) form an interaction with substrate tRNA region.

The protein belongs to the IPP transferase family. Monomer. The cofactor is Mg(2+).

It catalyses the reaction adenosine(37) in tRNA + dimethylallyl diphosphate = N(6)-dimethylallyladenosine(37) in tRNA + diphosphate. Catalyzes the transfer of a dimethylallyl group onto the adenine at position 37 in tRNAs that read codons beginning with uridine, leading to the formation of N6-(dimethylallyl)adenosine (i(6)A). The sequence is that of tRNA dimethylallyltransferase from Bacillus cereus (strain AH187).